A 158-amino-acid chain; its full sequence is MEKVPITIRGFAALEQELKHRQQVERPRIIQAIAEARALGDLSENAEYHAAKEAQSLNEGRVLELESLISRAEVIDVAKLSGSKVKFGATVQLIDEDTEEEKTYQIVGEPEADVRSGRVSITSPVARALIGKGVGDTVEVSTPGGGKSYEIVGISFSG.

This sequence belongs to the GreA/GreB family.

In terms of biological role, necessary for efficient RNA polymerase transcription elongation past template-encoded arresting sites. The arresting sites in DNA have the property of trapping a certain fraction of elongating RNA polymerases that pass through, resulting in locked ternary complexes. Cleavage of the nascent transcript by cleavage factors such as GreA or GreB allows the resumption of elongation from the new 3'terminus. GreA releases sequences of 2 to 3 nucleotides. The protein is Transcription elongation factor GreA of Methylobacterium nodulans (strain LMG 21967 / CNCM I-2342 / ORS 2060).